The primary structure comprises 419 residues: L-rhamnose isomerase (419 aa).

Mn(2+)-binding residues include H262, D294, and D296.

Belongs to the rhamnose isomerase family. Homotetramer. The cofactor is Mn(2+).

The protein resides in the cytoplasm. The catalysed reaction is L-rhamnopyranose = L-rhamnulose. It participates in carbohydrate degradation; L-rhamnose degradation; glycerone phosphate from L-rhamnose: step 1/3. Catalyzes the interconversion of L-rhamnose and L-rhamnulose. This chain is L-rhamnose isomerase, found in Escherichia coli O127:H6 (strain E2348/69 / EPEC).